Reading from the N-terminus, the 265-residue chain is MDQTVSENLIQVKKESGGIAVITINRPKSLNSLTRAMMVDLAKAFKDMDSDESVQVVIFTGSGRSFCSGVDLTAAESVFKGDVKDPETDPVVQMERLRKPIIGAINGFAITAGFELALACDILVASRGAKFMDTHARFGIFPSWGLSQKLSRIIGANKAREVSLTSMPLTADVAGKLGFVNHVVEEGEALKKAREIAEAIIKNEQGMVLRIKSVINDGLKLDLGHALTLEKERAHAYYSGMTKEQFRKMQEFIAGRGSKKPSSKL.

At M1 the chain carries N-acetylmethionine. Residues 68 to 72 (SGVDL) and A112 each bind substrate. Residues 263 to 265 (SKL) carry the Microbody targeting signal motif.

Belongs to the enoyl-CoA hydratase/isomerase family.

It is found in the peroxisome. It carries out the reaction a (3S)-3-hydroxyacyl-CoA = a (2E)-enoyl-CoA + H2O. It catalyses the reaction a 4-saturated-(3S)-3-hydroxyacyl-CoA = a (3E)-enoyl-CoA + H2O. It functions in the pathway lipid metabolism; fatty acid beta-oxidation. Its function is as follows. Straight-chain enoyl-CoA thioesters from C4 up to at least C16 are processed, although with decreasing catalytic rate. The chain is Probable enoyl-CoA hydratase 1, peroxisomal from Arabidopsis thaliana (Mouse-ear cress).